The chain runs to 195 residues: Pyridoxal 5'-phosphate synthase subunit PdxT (195 aa).

An L-glutamine-binding site is contributed by 46–48; the sequence is GES. The Nucleophile role is filled by Cys78. Residues Arg107 and 136-137 each bind L-glutamine; that span reads IR. Active-site charge relay system residues include His173 and Glu175.

Belongs to the glutaminase PdxT/SNO family. As to quaternary structure, in the presence of PdxS, forms a dodecamer of heterodimers. Only shows activity in the heterodimer.

It carries out the reaction aldehydo-D-ribose 5-phosphate + D-glyceraldehyde 3-phosphate + L-glutamine = pyridoxal 5'-phosphate + L-glutamate + phosphate + 3 H2O + H(+). The enzyme catalyses L-glutamine + H2O = L-glutamate + NH4(+). It functions in the pathway cofactor biosynthesis; pyridoxal 5'-phosphate biosynthesis. Its function is as follows. Catalyzes the hydrolysis of glutamine to glutamate and ammonia as part of the biosynthesis of pyridoxal 5'-phosphate. The resulting ammonia molecule is channeled to the active site of PdxS. The chain is Pyridoxal 5'-phosphate synthase subunit PdxT from Dehalococcoides mccartyi (strain ATCC BAA-2100 / JCM 16839 / KCTC 5957 / BAV1).